The primary structure comprises 672 residues: MSSIRNQNDNRRPTFRDHRTPQFSGRGGSGGGGRRLQNPAHYPQRRDMSPIRRSSAISPVRRSQDHRQRSPEVRRHRSPEKESKDAVVTSTGSSRGATSASVTSSSRRHESGERHRETHRREDKEKKPEKSTDRDADRSNNIAARIQAPVVSSSTHHHHSNRHENRKSTAVKRPAADNRPMTYSTDVSVSRHSENRRKSSSDVSRRHGDKEKRDRKREDVKKKSNGERSSSSGRRREEDHKRKSESSRKEKKDEDVKEKVVDENKVEDEAVEMQGLVEVDCCEEEETIEQAKEHGSDEPERPESHQSAHSAAVSNASHHSDSEEELDYEEDDIDVDLDGDIDVETMKMAARGDLKVDDTTDEDEINDVKDETMEEQKEDGEPEKKKPRTSENDDKDKKHHGSSSSNSHRRREDDKDRRQSSDHHKERRRSPATRQRATDHKESRRSEGTSTRVESAASAAGTEIQRIPSLLTMRIAAPPGIKKLETLYHSGSGGSSSSSSHSSEMIIVGETFSNRWCQCSCAHHLPTTSSAAAAAGSLDASPASSSSSSSNSDASVSRIPSLMSLRTPFNNSCLFLAPPPPPSSSSSSKRSHEAAARIRAPSPPRRSFGDRGNRSDEHHGGSRHMDVGPQRRRLQDHRVRDDGRRVSSFEDRKRPERGFQDSGRVSLSLKHL.

Disordered regions lie at residues 1–463 (MSSI…AGTE) and 576–672 (LAPP…LKHL). Residues 8 to 20 (NDNRRPTFRDHRT) show a composition bias toward basic and acidic residues. The segment covering 25-34 (GRGGSGGGGR) has biased composition (gly residues). Positions 62-85 (RSQDHRQRSPEVRRHRSPEKESKD) are enriched in basic and acidic residues. A compositionally biased stretch (low complexity) spans 87-105 (VVTSTGSSRGATSASVTSS). 4 stretches are compositionally biased toward basic and acidic residues: residues 107 to 138 (RRHESGERHRETHRREDKEKKPEKSTDRDADR), 189 to 226 (VSRHSENRRKSSSDVSRRHGDKEKRDRKREDVKKKSNG), 234 to 268 (RRREEDHKRKSESSRKEKKDEDVKEKVVDENKVED), and 289 to 306 (EQAKEHGSDEPERPESHQ). A compositionally biased stretch (low complexity) spans 307-317 (SAHSAAVSNAS). A compositionally biased stretch (acidic residues) spans 322–343 (SEEELDYEEDDIDVDLDGDIDV). 6 stretches are compositionally biased toward basic and acidic residues: residues 366–375 (NDVKDETMEE), 382–396 (PEKKKPRTSENDDKD), 410–424 (RREDDKDRRQSSDHH), 436–447 (RATDHKESRRSE), 607–626 (SFGDRGNRSDEHHGGSRHMD), and 636–659 (DHRVRDDGRRVSSFEDRKRPERGF).

As to expression, highly expressed in intestinal cells, lateral hypodermal (seam) cells, Pn.p ventral hypodermal cells, and spermatheca. Expressed at low levels in the ventral nerve cord.

It localises to the nucleus. In terms of biological role, together with unc-5, involved in touch neuron axon guidance. During gonad morphogenesis, plays a role in the unc-5-/unc-6-mediated migration of distal tip cells along the body. The polypeptide is Protein seu-1 (Caenorhabditis elegans).